Here is an 84-residue protein sequence, read N- to C-terminus: Delta-thalatoxin-Hhe1a (84 aa).

Residues 1-19 (MAYQKIVFVALMLVLAVSA) form the signal peptide. A propeptide spanning residues 20-33 (MRLPDQQDQDISVA) is cleaved from the precursor. 3 cysteine pairs are disulfide-bonded: cysteine 38–cysteine 78, cysteine 40–cysteine 68, and cysteine 61–cysteine 79.

It belongs to the sea anemone sodium channel inhibitory toxin family. Type II subfamily.

The protein localises to the secreted. It is found in the nematocyst. Its function is as follows. Binds specifically to the voltage-gated sodium channel (Nav) and delays its inactivation. This Heterodactyla hemprichii (Hemprich's sea anemone) protein is Delta-thalatoxin-Hhe1a.